The chain runs to 176 residues: Pituitary adenylate cyclase-activating polypeptide (176 aa).

Positions 1–24 (MTMCSGARLALLVYGIIMHSSVYC) are cleaved as a signal peptide. Positions 25–80 (SPAAAGLRFPGIRPEDEAYDEDGNPLQDFYDSDPPGVGGPASTLRDAYALYYPAEE) are excised as a propeptide. The interval 150–158 (VKKYLAAVL) is important for receptor binding. Residue Leu-158 is modified to Leucine amide. Lys-169 carries the lysine amide modification. The propeptide occupies 173–176 (IAYL).

It belongs to the glucagon family.

The protein localises to the secreted. In terms of biological role, PACAP is a neuropeptide involved in diverse array of physiological processes through activating the PACAP subfamily of class B1 G protein-coupled receptors: VIP receptor 1 (VIPR1), VIP receptor 2 (VIPR2), and PACAP type I receptor (ADCYAP1R1). Exerts neuroprotective and general cytoprotective effects due to anti-apoptotic, anti-inflammatory, and antioxidant actions. Promotes neuron projection development through the RAPGEF2/Rap1/B-Raf/ERK pathway. In chromaffin cells, induces long-lasting increase of intracellular calcium concentrations and neuroendocrine secretion. Involved in the control of glucose homeostasis, induces insulin secretion by pancreatic beta cells. PACAP exists in two bioactive forms from proteolysis of the same precursor protein, PACAP27 and PACAP38, which differ by eleven amino acid residues in the C-terminus. The protein is Pituitary adenylate cyclase-activating polypeptide (ADCYAP1) of Sus scrofa (Pig).